A 505-amino-acid polypeptide reads, in one-letter code: Aspartyl/glutamyl-tRNA(Asn/Gln) amidotransferase subunit B (505 aa).

The protein belongs to the GatB/GatE family. GatB subfamily. As to quaternary structure, heterotrimer of A, B and C subunits.

The enzyme catalyses L-glutamyl-tRNA(Gln) + L-glutamine + ATP + H2O = L-glutaminyl-tRNA(Gln) + L-glutamate + ADP + phosphate + H(+). It carries out the reaction L-aspartyl-tRNA(Asn) + L-glutamine + ATP + H2O = L-asparaginyl-tRNA(Asn) + L-glutamate + ADP + phosphate + 2 H(+). Its function is as follows. Allows the formation of correctly charged Asn-tRNA(Asn) or Gln-tRNA(Gln) through the transamidation of misacylated Asp-tRNA(Asn) or Glu-tRNA(Gln) in organisms which lack either or both of asparaginyl-tRNA or glutaminyl-tRNA synthetases. The reaction takes place in the presence of glutamine and ATP through an activated phospho-Asp-tRNA(Asn) or phospho-Glu-tRNA(Gln). The polypeptide is Aspartyl/glutamyl-tRNA(Asn/Gln) amidotransferase subunit B (Dinoroseobacter shibae (strain DSM 16493 / NCIMB 14021 / DFL 12)).